A 179-amino-acid chain; its full sequence is Large ribosomal subunit protein uL5 (179 aa).

The protein belongs to the universal ribosomal protein uL5 family. In terms of assembly, part of the 50S ribosomal subunit; part of the 5S rRNA/L5/L18/L25 subcomplex. Contacts the 5S rRNA and the P site tRNA. Forms a bridge to the 30S subunit in the 70S ribosome.

Functionally, this is one of the proteins that bind and probably mediate the attachment of the 5S RNA into the large ribosomal subunit, where it forms part of the central protuberance. In the 70S ribosome it contacts protein S13 of the 30S subunit (bridge B1b), connecting the 2 subunits; this bridge is implicated in subunit movement. Contacts the P site tRNA; the 5S rRNA and some of its associated proteins might help stabilize positioning of ribosome-bound tRNAs. In Staphylococcus aureus (strain MW2), this protein is Large ribosomal subunit protein uL5.